We begin with the raw amino-acid sequence, 177 residues long: Large ribosomal subunit protein uL6 (177 aa).

This sequence belongs to the universal ribosomal protein uL6 family. As to quaternary structure, part of the 50S ribosomal subunit.

Its function is as follows. This protein binds to the 23S rRNA, and is important in its secondary structure. It is located near the subunit interface in the base of the L7/L12 stalk, and near the tRNA binding site of the peptidyltransferase center. The chain is Large ribosomal subunit protein uL6 from Rickettsia typhi (strain ATCC VR-144 / Wilmington).